A 529-amino-acid polypeptide reads, in one-letter code: Peptide chain release factor 3 (529 aa).

Positions 11–280 (AKRRTFAIIS…GLVEWAPAPM (270 aa)) constitute a tr-type G domain. GTP is bound by residues 20-27 (SHPDAGKT), 88-92 (DTPGH), and 142-145 (NKLD).

This sequence belongs to the TRAFAC class translation factor GTPase superfamily. Classic translation factor GTPase family. PrfC subfamily.

The protein resides in the cytoplasm. In terms of biological role, increases the formation of ribosomal termination complexes and stimulates activities of RF-1 and RF-2. It binds guanine nucleotides and has strong preference for UGA stop codons. It may interact directly with the ribosome. The stimulation of RF-1 and RF-2 is significantly reduced by GTP and GDP, but not by GMP. The protein is Peptide chain release factor 3 of Shigella flexneri serotype 5b (strain 8401).